The following is a 347-amino-acid chain: Galactoside alpha-(1,2)-fucosyltransferase 2 (347 aa).

Topologically, residues 1–5 (MASAQ) are cytoplasmic. The chain crosses the membrane as a helical; Signal-anchor for type II membrane protein span at residues 6–26 (VPFSFPLAHFLIFVFVTSTII). At 27–347 (HLQQRIVKLQ…PADLSPLLKH (321 aa)) the chain is on the lumenal side. Asparagine 192, asparagine 258, asparagine 286, and asparagine 312 each carry an N-linked (GlcNAc...) asparagine glycan.

Belongs to the glycosyltransferase 11 family. Expressed in stomach, colon, ovary and uterus, specifically in luminal uterine epithelium. Expressed in various tissues including heart, liver, kidney, testis, epididymis, small intestine,and cecum. Expressed in duodenum, jejunum and ileum.

Its subcellular location is the golgi apparatus. The protein localises to the golgi stack membrane. It catalyses the reaction a beta-D-galactosyl-(1-&gt;3)-N-acetyl-beta-D-glucosaminyl derivative + GDP-beta-L-fucose = an alpha-L-Fuc-(1-&gt;2)-beta-D-Gal-(1-&gt;3)-beta-D-GlcNAc derivative + GDP + H(+). It carries out the reaction a beta-D-galactosyl-(1-&gt;4)-N-acetyl-beta-D-glucosaminyl derivative + GDP-beta-L-fucose = an alpha-L-Fuc-(1-&gt;2)-beta-D-Gal-(1-&gt;4)-beta-D-GlcNAc derivative + GDP + H(+). The catalysed reaction is a neolactoside nLc4Cer + GDP-beta-L-fucose = a neolactoside IV(2)-alpha-Fuc-nLc4Cer + GDP + H(+). The enzyme catalyses a neolactoside nLc4Cer(d18:1(4E)) + GDP-beta-L-fucose = a neolactoside IV(2)-alpha-Fuc-nLc4Cer(d18:1(4E)) + GDP + H(+). It catalyses the reaction a ganglioside GM1 + GDP-beta-L-fucose = a ganglioside Fuc-GM1 + GDP + H(+). It carries out the reaction a ganglioside GA1 + GDP-beta-L-fucose = a ganglioside Fuc-GA1 + GDP + H(+). The catalysed reaction is Lc4Cer + GDP-beta-L-fucose = alpha-L-fucosyl-(1-&gt;2)-beta-D-galactosyl-(1-&gt;3)-N-acetyl-beta-D-glucosaminyl-(1-&gt;3)-beta-D-galactosyl-(1-&gt;4)-beta-D-glucosyl-(1&lt;-&gt;1')-ceramide + GDP + H(+). The enzyme catalyses a beta-D-Gal-(1-&gt;3)-beta-D-GlcNAc-(1-&gt;3)-beta-D-Gal-(1-&gt;4)-beta-D-Glc-(1&lt;-&gt;1')-Cer(d18:1(4E)) + GDP-beta-L-fucose = alpha-L-fucosyl-(1-&gt;2)- beta-D-galactosyl-(1-&gt;3)-N-acetyl-beta-D-glucosaminyl-(1-&gt;3)-beta-D-galactosyl-(1-&gt;4)-beta-D-glucosyl-(1&lt;-&gt;1')-N-acylsphing-4-enine + GDP + H(+). It catalyses the reaction a ganglioside GD1b + GDP-beta-L-fucose = a ganglioside Fuc-GD1b + GDP + H(+). It carries out the reaction a ganglioside GM1 (d18:1(4E)) + GDP-beta-L-fucose = a ganglioside Fuc-GM1 (d18:1(4E)) + GDP + H(+). The catalysed reaction is a globoside GalGb4Cer (d18:1(4E)) + GDP-beta-L-fucose = a globoside Globo-H (d18:1(4E)) + GDP + H(+). The enzyme catalyses a lactoside III(4)-a-Fuc-Lc4Cer + GDP-beta-L-fucose = a lactoside IV(2),III(4)-a-[Fuc]2-Lc4Cer + GDP + H(+). It catalyses the reaction beta-D-galactosyl-(1-&gt;3)-N-acetyl-D-galactosamine + GDP-beta-L-fucose = alpha-L-fucosyl-(1-&gt;2)-beta-D-galactosyl-(1-&gt;3)-N-acetyl-D-galactosamine + GDP + H(+). The protein operates within protein modification; protein glycosylation. Catalyzes the transfer of L-fucose, from a guanosine diphosphate-beta-L-fucose, to the terminal galactose on both O- and N-linked glycans chains of cell surface glycoproteins and glycolipids and the resulting epitope regulates several processes such as cell-cell interaction including host-microbe interaction, cell surface expression and cell proliferation. Preferentially fucosylates gangliosides GA1 and GM1 in the antrum, cecum and colon and in the female reproductive organs. Fucosylated host glycoproteins or glycolipids mediate interaction with intestinal microbiota influencing its composition. Creates a soluble precursor oligosaccharide FuC-alpha ((1,2)Galbeta-) called the H antigen which is an essential substrate for the final step in the soluble ABO blood group antigen synthesis pathway. The chain is Galactoside alpha-(1,2)-fucosyltransferase 2 from Mus musculus (Mouse).